The sequence spans 307 residues: Trehalose transport system permease protein SugA (307 aa).

A run of 6 helical transmembrane segments spans residues 25-45 (LAFM…AYPI), 89-109 (LAIT…LALV), 123-143 (AVLI…YYAW), 168-188 (LGIV…LLLL), 217-237 (ILPM…LDAF), and 272-292 (LGSA…FIFI). The ABC transmembrane type-1 domain maps to 85–291 (LAVTLAITAV…GCVAVIAFIF (207 aa)).

Belongs to the binding-protein-dependent transport system permease family. The complex is composed of two ATP-binding proteins (SugC), two transmembrane proteins (Suga and SugB) and a solute-binding protein (LpqY).

It localises to the cell inner membrane. Its function is as follows. Part of the ABC transporter complex LpqY-SugA-SugB-SugC, which is highly specific for uptake of trehalose. Involved in the recycling of extracellular trehalose released from trehalose-containing molecules synthesized by M.tuberculosis. Trehalose uptake is essential for virulence. Probably responsible for the translocation of the substrate across the membrane. The chain is Trehalose transport system permease protein SugA (sugA) from Mycobacterium tuberculosis (strain CDC 1551 / Oshkosh).